A 259-amino-acid polypeptide reads, in one-letter code: Uridylate kinase (259 aa).

21-24 (KLSG) provides a ligand contact to ATP. Residue Gly63 participates in UMP binding. Residues Gly64 and Arg68 each coordinate ATP. UMP is bound by residues Asp83 and 144-151 (TGNPYFTT). ATP contacts are provided by Thr171, Phe177, and Asp180.

Belongs to the UMP kinase family. In terms of assembly, homohexamer.

It localises to the cytoplasm. The enzyme catalyses UMP + ATP = UDP + ADP. It functions in the pathway pyrimidine metabolism; CTP biosynthesis via de novo pathway; UDP from UMP (UMPK route): step 1/1. With respect to regulation, inhibited by UTP. Its function is as follows. Catalyzes the reversible phosphorylation of UMP to UDP. The sequence is that of Uridylate kinase from Salinibacter ruber (strain DSM 13855 / M31).